The primary structure comprises 310 residues: Apolipoprotein E (310 aa).

An N-terminal signal peptide occupies residues 1–18 (MKVLWAALVVTLLAGCGA). Tandem repeats lie at residues 77–98 (ALMD…EQLG), 99–120 (PVTE…ARLG), 121–142 (ADME…AMVG), 143–164 (QSTE…KRLL), 165–186 (RDAE…EGAE), 187–208 (RSVN…TVHT), 209–226 (LVSK…QRLR), and 227–248 (GRLE…EQVQ). Residues 77 to 248 (ALMDDTMKEV…RLDEVREQVQ (172 aa)) form an 8 X 22 AA approximate tandem repeats region. The tract at residues 155 to 165 (HLRKMRKRLLR) is LDL and other lipoprotein receptors binding. A heparin-binding site is contributed by 159–162 (MRKR). Residues 207–283 (HTLVSKPLQE…SWFEPLVQDM (77 aa)) form a lipid-binding and lipoprotein association region. 222 to 229 (AQRLRGRL) serves as a coordination point for heparin. Residues 259–310 (NQVRLQAEAFQGRLKSWFEPLVQDMQQKWAELVEKVQLAVGAVPTSVPSEKQ) are homooligomerization. The tract at residues 271-283 (RLKSWFEPLVQDM) is specificity for association with VLDL.

It belongs to the apolipoprotein A1/A4/E family. Homotetramer. May interact with ABCA1; functionally associated with ABCA1 in the biogenesis of HDLs. May interact with APP/A4 amyloid-beta peptide; the interaction is extremely stable in vitro but its physiological significance is unclear. May interact with MAPT. May interact with MAP2. In the cerebrospinal fluid, interacts with secreted SORL1. Interacts with PMEL; this allows the loading of PMEL luminal fragment on ILVs to induce fibril nucleation. APOE exists as multiple glycosylated and sialylated glycoforms within cells and in plasma. The extent of glycosylation and sialylation are tissue and context specific. In terms of processing, glycated in plasma VLDL. Post-translationally, phosphorylated by FAM20C in the extracellular medium.

It is found in the secreted. Its subcellular location is the extracellular space. It localises to the extracellular matrix. The protein resides in the extracellular vesicle. The protein localises to the endosome. It is found in the multivesicular body. Its function is as follows. APOE is an apolipoprotein, a protein associating with lipid particles, that mainly functions in lipoprotein-mediated lipid transport between organs via the plasma and interstitial fluids. APOE is a core component of plasma lipoproteins and is involved in their production, conversion and clearance. Apolipoproteins are amphipathic molecules that interact both with lipids of the lipoprotein particle core and the aqueous environment of the plasma. As such, APOE associates with chylomicrons, chylomicron remnants, very low density lipoproteins (VLDL) and intermediate density lipoproteins (IDL) but shows a preferential binding to high-density lipoproteins (HDL). It also binds a wide range of cellular receptors including the LDL receptor/LDLR and the very low-density lipoprotein receptor/VLDLR that mediate the cellular uptake of the APOE-containing lipoprotein particles. Finally, APOE also has a heparin-binding activity and binds heparan-sulfate proteoglycans on the surface of cells, a property that supports the capture and the receptor-mediated uptake of APOE-containing lipoproteins by cells. The chain is Apolipoprotein E (APOE) from Ceratotherium simum cottoni (Northern white rhinoceros).